The primary structure comprises 505 residues: Maturase K (505 aa).

Belongs to the intron maturase 2 family. MatK subfamily.

The protein localises to the plastid. It localises to the chloroplast. In terms of biological role, usually encoded in the trnK tRNA gene intron. Probably assists in splicing its own and other chloroplast group II introns. The protein is Maturase K of Coffea arabica (Arabian coffee).